Here is a 140-residue protein sequence, read N- to C-terminus: Cytochrome c oxidase subunit 6, mitochondrial (140 aa).

It belongs to the cytochrome c oxidase subunit 5A family. As to quaternary structure, component of the cytochrome c oxidase (complex IV, CIV), a multisubunit enzyme composed of a catalytic core of 3 subunits and several supernumerary subunits. The complex exists as a monomer or a dimer and forms supercomplexes (SCs) in the inner mitochondrial membrane with ubiquinol-cytochrome c oxidoreductase (cytochrome b-c1 complex, complex III, CIII).

It is found in the mitochondrion inner membrane. Its pathway is energy metabolism; oxidative phosphorylation. Component of the cytochrome c oxidase, the last enzyme in the mitochondrial electron transport chain which drives oxidative phosphorylation. The respiratory chain contains 3 multisubunit complexes succinate dehydrogenase (complex II, CII), ubiquinol-cytochrome c oxidoreductase (cytochrome b-c1 complex, complex III, CIII) and cytochrome c oxidase (complex IV, CIV), that cooperate to transfer electrons derived from NADH and succinate to molecular oxygen, creating an electrochemical gradient over the inner membrane that drives transmembrane transport and the ATP synthase. Cytochrome c oxidase is the component of the respiratory chain that catalyzes the reduction of oxygen to water. Electrons originating from reduced cytochrome c in the intermembrane space (IMS) are transferred via the dinuclear copper A center (CU(A)) of subunit 2 and heme A of subunit 1 to the active site in subunit 1, a binuclear center (BNC) formed by heme A3 and copper B (CU(B)). The BNC reduces molecular oxygen to 2 water molecules using 4 electrons from cytochrome c in the IMS and 4 protons from the mitochondrial matrix. This is Cytochrome c oxidase subunit 6, mitochondrial (cox6) from Schizosaccharomyces pombe (strain 972 / ATCC 24843) (Fission yeast).